Reading from the N-terminus, the 171-residue chain is Nicotinamide-nucleotide adenylyltransferase (171 aa).

It belongs to the archaeal NMN adenylyltransferase family.

Its subcellular location is the cytoplasm. The catalysed reaction is beta-nicotinamide D-ribonucleotide + ATP + H(+) = diphosphate + NAD(+). Its pathway is cofactor biosynthesis; NAD(+) biosynthesis; NAD(+) from nicotinamide D-ribonucleotide: step 1/1. This Methanococcus maripaludis (strain C6 / ATCC BAA-1332) protein is Nicotinamide-nucleotide adenylyltransferase.